A 406-amino-acid chain; its full sequence is MLFHSLSGPEVHGVIDEMDRRAKSEAPAISSAIDRGDTETTMPSISSDRAALCAGCGGKISDRYYLLAVDKQWHMRCLKCCECKLNLESELTCFSKDGSIYCKEDYYRRFSVQRCARCHLGISASEMVMRARDLVYHLNCFTCTTCNKMLTTGDHFGMKDSLVYCRLHFEALLQGEYPAHFNHADVAAAAAAAAAAKSAGLGSAGANPLGLPYYNGVGTVQKGRPRKRKSPGPGADLAAYNAALSCNENDAEHLDRDQPYPSSQKTKRMRTSFKHHQLRTMKSYFAINHNPDAKDLKQLAQKTGLTKRVLQVWFQNARAKFRRNLLRQENTGVDKTSDATLQTGTPSGPASELSNASLSPSSTPTTLTDLTSPTLPTVTSVLTSVPGNLEGHEPHSPSQTTLTNLF.

LIM zinc-binding domains lie at 53-105 and 115-168; these read CAGC…CKED and CARC…CRLH. The tract at residues 250–270 is disordered; sequence DAEHLDRDQPYPSSQKTKRMR. The homeobox DNA-binding region spans 266-325; the sequence is TKRMRTSFKHHQLRTMKSYFAINHNPDAKDLKQLAQKTGLTKRVLQVWFQNARAKFRRNL. Positions 307–323 match the Nuclear localization signal motif; it reads KRVLQVWFQNARAKFRR. Residues 328–356 show a composition bias toward polar residues; that stretch reads QENTGVDKTSDATLQTGTPSGPASELSNA. Disordered stretches follow at residues 328-375 and 387-406; these read QENT…SPTL and GNLE…TNLF. Residues 357-375 are compositionally biased toward low complexity; that stretch reads SLSPSSTPTTLTDLTSPTL. Over residues 396–406 the composition is skewed to polar residues; it reads SPSQTTLTNLF.

Interacts (via LIM domains) with CITED2. Interacts with POU4F2 isoform 1.

The protein localises to the nucleus. Its function is as follows. Acts as a transcriptional activator. Stimulates the promoter of the alpha-glycoprotein gene. Transcriptional regulatory protein involved in the control of cell differentiation in developing lymphoid and neural cell types. This is LIM/homeobox protein Lhx2 (Lhx2) from Mus musculus (Mouse).